A 252-amino-acid chain; its full sequence is MLIGSHVSPTDPLAAAEAEGADVVQIFLGNPQSWKAPKPRDDAAALKAATLPIYVHAPYLINLASANNRVRIPSRKILQETCAAAADIGAAAVIVHGGHVADDNDIDKGFQRWRKALDRLETEVPVYLENTAGGDHAMARRFDTIARLWDVIGDTGIGFCLDTCHTWAAGEALTDAVDRIKAITGRIDLVHCNDSRDEAGSGRDRHANLGSGQIDPDLLVAAVKAAGAPVICETADQGRKDDIAFLRERTGS.

Zn(2+) is bound by residues His56, His96, Glu129, Asp162, His165, His191, Asp204, His206, and Glu233.

The protein belongs to the AP endonuclease 2 family. Requires Zn(2+) as cofactor.

It catalyses the reaction Endonucleolytic cleavage to 5'-phosphooligonucleotide end-products.. In terms of biological role, endonuclease IV plays a role in DNA repair. It cleaves phosphodiester bonds at apurinic or apyrimidinic (AP) sites, generating a 3'-hydroxyl group and a 5'-terminal sugar phosphate. This Mycobacterium tuberculosis (strain ATCC 25177 / H37Ra) protein is Probable endonuclease 4.